A 478-amino-acid polypeptide reads, in one-letter code: DNA gyrase subunit B (478 aa).

In terms of domain architecture, Toprim spans 319–438; that stretch reads CEIYLVEGDS…GGHVYIAQPP (120 aa). Mg(2+) is bound by residues E325, D403, and D405.

Belongs to the type II topoisomerase GyrB family. In terms of assembly, heterotetramer, composed of two GyrA and two GyrB chains. In the heterotetramer, GyrA contains the active site tyrosine that forms a transient covalent intermediate with DNA, while GyrB binds cofactors and catalyzes ATP hydrolysis. Mg(2+) is required as a cofactor. It depends on Mn(2+) as a cofactor. Ca(2+) serves as cofactor.

Its subcellular location is the cytoplasm. The enzyme catalyses ATP-dependent breakage, passage and rejoining of double-stranded DNA.. In terms of biological role, a type II topoisomerase that negatively supercoils closed circular double-stranded (ds) DNA in an ATP-dependent manner to modulate DNA topology and maintain chromosomes in an underwound state. Negative supercoiling favors strand separation, and DNA replication, transcription, recombination and repair, all of which involve strand separation. Also able to catalyze the interconversion of other topological isomers of dsDNA rings, including catenanes and knotted rings. Type II topoisomerases break and join 2 DNA strands simultaneously in an ATP-dependent manner. This Cytophaga aurantiaca protein is DNA gyrase subunit B (gyrB).